The primary structure comprises 233 residues: Type IV secretion system protein PtlE homolog (233 aa).

Residues 42–62 (VAWAALAVTALSLIAIATMLP) traverse the membrane as a helical segment.

Belongs to the virB8 family.

Its subcellular location is the cell inner membrane. The polypeptide is Type IV secretion system protein PtlE homolog (ptlE) (Bordetella bronchiseptica (strain ATCC BAA-588 / NCTC 13252 / RB50) (Alcaligenes bronchisepticus)).